Consider the following 299-residue polypeptide: Oxygen-dependent coproporphyrinogen-III oxidase (299 aa).

Ser92 lines the substrate pocket. His96 and His106 together coordinate a divalent metal cation. Residue His106 is the Proton donor of the active site. 108–110 (NVR) is a binding site for substrate. Positions 145 and 175 each coordinate a divalent metal cation. The segment at 240 to 275 (YVEFNLVWDRGTLFGLQTGGRTESILMSMPPLVRWE) is important for dimerization. 258 to 260 (GGR) lines the substrate pocket.

This sequence belongs to the aerobic coproporphyrinogen-III oxidase family. In terms of assembly, homodimer. A divalent metal cation serves as cofactor.

The protein resides in the cytoplasm. The enzyme catalyses coproporphyrinogen III + O2 + 2 H(+) = protoporphyrinogen IX + 2 CO2 + 2 H2O. Its pathway is porphyrin-containing compound metabolism; protoporphyrin-IX biosynthesis; protoporphyrinogen-IX from coproporphyrinogen-III (O2 route): step 1/1. In terms of biological role, involved in the heme biosynthesis. Catalyzes the aerobic oxidative decarboxylation of propionate groups of rings A and B of coproporphyrinogen-III to yield the vinyl groups in protoporphyrinogen-IX. The chain is Oxygen-dependent coproporphyrinogen-III oxidase from Shigella flexneri.